We begin with the raw amino-acid sequence, 198 residues long: Dual specificity protein phosphatase 13B (198 aa).

The 149-residue stretch at 45-193 (HINEVWPNLF…LQVLDNRLRR (149 aa)) folds into the Tyrosine-protein phosphatase domain. Cys-138 serves as the catalytic Phosphocysteine intermediate.

It belongs to the protein-tyrosine phosphatase family. Non-receptor class dual specificity subfamily. As to expression, most abundantly expressed in the testis.

The enzyme catalyses O-phospho-L-tyrosyl-[protein] + H2O = L-tyrosyl-[protein] + phosphate. The catalysed reaction is O-phospho-L-seryl-[protein] + H2O = L-seryl-[protein] + phosphate. It catalyses the reaction O-phospho-L-threonyl-[protein] + H2O = L-threonyl-[protein] + phosphate. Its function is as follows. Dual specificity phosphatase that dephosphorylates MAPK8/JNK and MAPK14/p38, but not MAPK1/ERK2, in vitro. Exhibits intrinsic phosphatase activity towards both phospho-seryl/threonyl and -tyrosyl residues, with similar specific activities in vitro. In Mus musculus (Mouse), this protein is Dual specificity protein phosphatase 13B.